Here is a 149-residue protein sequence, read N- to C-terminus: Small ribosomal subunit protein bS6 (149 aa).

Residues 94–149 (EKHEEGPSAMMQKRDRDDRPRRDGDRPDRGGFGDRGPRPDRGDRDDRPRRPREDRA) are disordered.

This sequence belongs to the bacterial ribosomal protein bS6 family.

In terms of biological role, binds together with bS18 to 16S ribosomal RNA. The sequence is that of Small ribosomal subunit protein bS6 from Sinorhizobium fredii (strain NBRC 101917 / NGR234).